We begin with the raw amino-acid sequence, 172 residues long: Large ribosomal subunit protein uL10 (172 aa).

It belongs to the universal ribosomal protein uL10 family. As to quaternary structure, part of the ribosomal stalk of the 50S ribosomal subunit. The N-terminus interacts with L11 and the large rRNA to form the base of the stalk. The C-terminus forms an elongated spine to which L12 dimers bind in a sequential fashion forming a multimeric L10(L12)X complex.

Functionally, forms part of the ribosomal stalk, playing a central role in the interaction of the ribosome with GTP-bound translation factors. The sequence is that of Large ribosomal subunit protein uL10 from Leifsonia xyli subsp. xyli (strain CTCB07).